The chain runs to 1957 residues: MHGSVSGYLLVNAEVDSMGGVIDSGGGIGVKTSPRRTAIEKAQAELRQEYDVREERRRELEFLEKGGNPLDFKFGIATSHSVQSTSLTDQQAEHFVNSEVKDSFALTASPHGDSVESSGRPGVPTISEPNTADNLLLFDSENKSVEGERNLRHPNRQNRTSESERSSKAHTNQNTKETEDSAIFRPYARRNRSKISRDPARSSSTDLVQNRGGLATSISIRRGSVEGKGCIPEAANQKDMHTTSVSCPVFANSNGNIVPKNRVSSNSLNTKVDGEPVVRESTAGSKTSLLKDEADISYSKSSAYLPVGESGLAGEKAQLVSTGGSPKAATIAGQKNSSTQLNGLRDSTVEEESLTNRGATGTNGLESESSHANNVEVNVDNERDLYKVDKLDSDEISMQKTLRVEGLLDQTVGEMTKTKIEDETGQSTTIISECIPECEMQMKSVKIENQSHRSTAEMQTKEKSSETEKRLQDGLVVLENDSKVGSILSENPSSTLCSGIPQASVDTSSCTVGNSLLSGTDIEALKHQPSSDAVMLDTVKEDAILEEARIIQAKKKRIAELSCGTAPVEVREKSQWDFVLEEMAWLANDFAQERLWKMTAAAQICHRVALTCQLRFEERNQHRKLKKIASVLSNAILQFWSSVEAEVPGELEETSLGIVKETCQESNCLNGRRCLAAGVKEYASRFLKYNNSSISYHSAAPSTPDNMCDPEILDISMVDQLTEASLFYSVPSGAMEVYLKSIESHLTRCEKSGSSMQEEVDTSAYDTAGDIGYNVTAFDEDEGETSTYYLPGAFESSRSFNISHKKRKNLMKSHSARSYDLGDDLPYVNNTGGSNSSSLMAKRPDSNINAGSVPTRRVRTASRQRVVSPFGCATTGNLPVPSKTDASSGDTSSFQDEYSSLHGGSAVQKGTEVESSVNFEKLLPYDMAETSGRPKKKKKTHQGSAYDQTWHLDPSVHVEQKDHWKKRPENNFDMNGLYGPHSAKKQKTTKQLVENNFDMAIPHTGSIPSPAASQMSNMSNPNKSIKFIGGRDRGRKIKGLKISPGQHGSGNPWSLFEDQALVVLVHDMGPNWELISDAMNSTLKIKCIYRNPTECKDRHKILMDKTAGDGADSAEDSGNSQSYPSTLPGIPKGSARQLFQRLQGPMEEDTLKSHFEKICLIGKKLHYRKTQSVIGVSVVSFVHGIQFSSCTGAGISQSLDIPGLHVSKYSCKSWLGFPENDGRDSKQIVPVHNSQVMALSQVFPNNLNGGVLTPLDVCDASTSGQDVFSLENPGLPMLNQGTPVLPTSGAHPSTPGSSGVVLSNNLPTTSGLQSASVRDGRFNVPRGSLPLDEQHRLQQFNQTLSGRNLQQPSLSTPAAVSGSDRGHRMVPGGNAMGVSGMNRNTPMSRPGFQGMASSAMPNTGSMLSSGMVEIPNTGNIHSGGGASQGNSMIRPREAVQHMMRMQAAQGNSPGIPAFSNLSSGFTNQTTPVQAYPGHLSQQHQMSPQSHVLGNSHHPHLQSPSQATGAQQEAFAIRQRQIHQRYLQQQQQQQQFPASGSMMPHVQQPQGSSVSSSPQNSPQTQPPVSPQPLSMPPVSPSPNINAMAQQKPQKSQLALHGLGRSPQSGTSGVNNQAGKQRQRQLQQSARQHPHQRQPTQGQQLNKQLKGMGRGNMIHQNITVDQSHLNGLTMPQGNQATEKGEIAVPVRPDQQSSVGTTTSTNLQSKPFVSPLSSNHSQQLPKSFPGALPPSPQQQMQLHSDNSIQGQSSPATPCNILSTSSPSIAPAVAPSNHQHLLIHQKQRNQVQSTAQRVVQHNHLGNSELSKKSQAERMPRVPQSVTNTTQTVSMGTTKGMPQASNDLKNIKAVGSTAVPALEPPSCVASVQITASKVVNSSNTDSAGNDPVSTPNQGLAQKHGIKGVTQRQQQSLPSEEKRPKLPEKPTVQNQKHLASEEQPHLEEAQELSSSKPPDTKVE.

4 disordered regions span residues 108 to 208, 261 to 287, 323 to 373, and 449 to 469; these read ASPH…TDLV, NRVS…GSKT, GGSP…SHAN, and NQSH…ETEK. Residues 140–151 are compositionally biased toward basic and acidic residues; sequence SENKSVEGERNL. 3 stretches are compositionally biased toward polar residues: residues 261–270, 333–342, and 355–372; these read NRVSSNSLNT, GQKNSSTQLN, and TNRG…SSHA. An HSA domain is found at 563–641; it reads CGTAPVEVRE…LSNAILQFWS (79 aa). Disordered stretches follow at residues 833–909 and 928–950; these read GSNS…AVQK and AETS…DQTW. The span at 884–898 shows a compositional bias: polar residues; sequence TDASSGDTSSFQDEY. The region spanning 1049-1105 is the SANT domain; that stretch reads SGNPWSLFEDQALVVLVHDMGPNWELISDAMNSTLKIKCIYRNPTECKDRHKILMDK. Disordered regions lie at residues 1107–1131, 1282–1314, 1344–1367, 1449–1644, 1687–1768, 1804–1840, and 1876–1957; these read AGDG…PGIP, TPVL…GLQS, LSGR…DRGH, QGNS…QQLN, PVRP…IAPA, ELSK…PQAS, and SSNT…TKVE. Polar residues-rich tracts occupy residues 1116–1125, 1290–1314, 1344–1358, 1459–1472, 1479–1492, and 1501–1510; these read DSGNSQSYPS, AHPS…GLQS, LSGR…STPA, SNLS…TTPV, LSQQ…SHVL, and QSPSQATGAQ. 2 stretches are compositionally biased toward low complexity: residues 1523–1534 and 1545–1562; these read QRYLQQQQQQQQ and VQQP…NSPQ. A compositionally biased stretch (pro residues) spans 1563-1579; it reads TQPPVSPQPLSMPPVSP. Composition is skewed to polar residues over residues 1582–1595, 1604–1618, 1635–1644, 1691–1722, and 1734–1758; these read NINA…QKSQ, SPQS…QAGK, RQPTQGQQLN, DQQS…QQLP, and QQQM…CNIL. Positions 1759–1768 are enriched in low complexity; that stretch reads STSSPSIAPA. The span at 1805–1815 shows a compositional bias: basic and acidic residues; the sequence is LSKKSQAERMP. Polar residues-rich tracts occupy residues 1819–1832 and 1876–1894; these read QSVT…SMGT and SSNT…NQGL. Composition is skewed to basic and acidic residues over residues 1913–1922 and 1932–1942; these read SEEKRPKLPE and LASEEQPHLEE.

It belongs to the EAF1 family. As to quaternary structure, component of the NuA4 histone acetyltransferase complex. Interacts with ARP4 and SWC4, and (via HSA domain) with TAF14 and TAF14B. In terms of tissue distribution, expressed in leaves.

Its subcellular location is the nucleus. Functionally, component of the NuA4 histone acetyltransferase complex which is involved in transcriptional activation of selected genes principally by acetylation of nucleosomal histone H4 and H2A. The polypeptide is Chromatin modification-related protein EAF1 A (EAF1A) (Arabidopsis thaliana (Mouse-ear cress)).